The following is a 314-amino-acid chain: 4-hydroxy-3-methylbut-2-enyl diphosphate reductase (314 aa).

Cysteine 12 serves as a coordination point for [4Fe-4S] cluster. 2 residues coordinate (2E)-4-hydroxy-3-methylbut-2-enyl diphosphate: histidine 41 and histidine 74. 2 residues coordinate dimethylallyl diphosphate: histidine 41 and histidine 74. Residues histidine 41 and histidine 74 each contribute to the isopentenyl diphosphate site. Cysteine 96 provides a ligand contact to [4Fe-4S] cluster. Histidine 124 is a (2E)-4-hydroxy-3-methylbut-2-enyl diphosphate binding site. Histidine 124 provides a ligand contact to dimethylallyl diphosphate. Residue histidine 124 coordinates isopentenyl diphosphate. Glutamate 126 (proton donor) is an active-site residue. (2E)-4-hydroxy-3-methylbut-2-enyl diphosphate is bound at residue threonine 167. Cysteine 197 is a binding site for [4Fe-4S] cluster. 4 residues coordinate (2E)-4-hydroxy-3-methylbut-2-enyl diphosphate: serine 225, serine 226, asparagine 227, and serine 269. The dimethylallyl diphosphate site is built by serine 225, serine 226, asparagine 227, and serine 269. Positions 225, 226, 227, and 269 each coordinate isopentenyl diphosphate.

The protein belongs to the IspH family. [4Fe-4S] cluster serves as cofactor.

The enzyme catalyses isopentenyl diphosphate + 2 oxidized [2Fe-2S]-[ferredoxin] + H2O = (2E)-4-hydroxy-3-methylbut-2-enyl diphosphate + 2 reduced [2Fe-2S]-[ferredoxin] + 2 H(+). It catalyses the reaction dimethylallyl diphosphate + 2 oxidized [2Fe-2S]-[ferredoxin] + H2O = (2E)-4-hydroxy-3-methylbut-2-enyl diphosphate + 2 reduced [2Fe-2S]-[ferredoxin] + 2 H(+). The protein operates within isoprenoid biosynthesis; dimethylallyl diphosphate biosynthesis; dimethylallyl diphosphate from (2E)-4-hydroxy-3-methylbutenyl diphosphate: step 1/1. It participates in isoprenoid biosynthesis; isopentenyl diphosphate biosynthesis via DXP pathway; isopentenyl diphosphate from 1-deoxy-D-xylulose 5-phosphate: step 6/6. Functionally, catalyzes the conversion of 1-hydroxy-2-methyl-2-(E)-butenyl 4-diphosphate (HMBPP) into a mixture of isopentenyl diphosphate (IPP) and dimethylallyl diphosphate (DMAPP). Acts in the terminal step of the DOXP/MEP pathway for isoprenoid precursor biosynthesis. The polypeptide is 4-hydroxy-3-methylbut-2-enyl diphosphate reductase (Aliivibrio fischeri (strain MJ11) (Vibrio fischeri)).